The chain runs to 330 residues: Putative quinone oxidoreductase YhfP (330 aa).

Residues Tyr-45, 160 to 163, 182 to 184, Arg-202, Leu-248, Ile-262, Ser-273, and Asn-320 contribute to the NADP(+) site; these read TGGV and TGN.

It belongs to the zinc-containing alcohol dehydrogenase family. Quinone oxidoreductase subfamily. In terms of assembly, homodimer, or homotetramer.

It is found in the cytoplasm. The chain is Putative quinone oxidoreductase YhfP (yhfP) from Bacillus subtilis (strain 168).